The chain runs to 390 residues: MASTEIMTVNMGPQHPSTHGVLRMVIELDGEVIQKITPHIGYLHRGVEKLSEHRTYHQTIPLTDRLDYLAPMSNNLGYVLAVEKLLGIEIPERAQTIRVIMAELTRLKSHLVWIACHALDIGAMTVFIYAFREREMIMSLYEKISGARMTSNYFRVGGLSSDVYDGFEKDVREVIDTFPGHFDTYEGLLTKNTIWVNRTVGNGVISAEDAVDYGITGPALRGSGVDWDLRRDNPYSGYEKYSFKVPVGEKCDTFDRYKVRLIEMREAVNIIRQALDSLKPGPVLADNPQVTYPPKENVYNSIEGLIHHFKIASEGFPVPEGEVYQSVEAPKGELGYYIVSDGGPKPYRMRIRPPSFVNLGAIEKMAKGSMIADLVAVIGTLDIVLGEIDR.

Belongs to the complex I 49 kDa subunit family. As to quaternary structure, NDH-1 is composed of 14 different subunits. Subunits NuoB, C, D, E, F, and G constitute the peripheral sector of the complex.

The protein localises to the cell inner membrane. The enzyme catalyses a quinone + NADH + 5 H(+)(in) = a quinol + NAD(+) + 4 H(+)(out). In terms of biological role, NDH-1 shuttles electrons from NADH, via FMN and iron-sulfur (Fe-S) centers, to quinones in the respiratory chain. The immediate electron acceptor for the enzyme in this species is believed to be ubiquinone. Couples the redox reaction to proton translocation (for every two electrons transferred, four hydrogen ions are translocated across the cytoplasmic membrane), and thus conserves the redox energy in a proton gradient. The protein is NADH-quinone oxidoreductase subunit D of Geobacter sulfurreducens (strain ATCC 51573 / DSM 12127 / PCA).